The sequence spans 396 residues: Probable sugar efflux transporter (396 aa).

Residues 1-14 (MTINPVSRKVAWLR) are Cytoplasmic-facing. A helical transmembrane segment spans residues 15–35 (VVTLAIAAFIFNTTEFVPVGL). The Periplasmic portion of the chain corresponds to 36-49 (LSDIAESFHMQTAQ). The chain crosses the membrane as a helical span at residues 50–70 (VGIMLTIYAWVVAVMSLPFML). Over 71-80 (LTSQMERRKL) the chain is Cytoplasmic. The chain crosses the membrane as a helical span at residues 81–101 (LIYLFVLFIASHVLSFLAWNF). A topological domain (periplasmic) is located at residue T102. Residues 103–123 (VLVISRIGIAFAHAIFWSITA) traverse the membrane as a helical segment. Over 124 to 135 (SLAIRLAPAGKR) the chain is Cytoplasmic. Residues 136–156 (AQALSLIATGTALAMVLGLPI) traverse the membrane as a helical segment. Over 157–168 (GRVVGQYFGWRT) the chain is Periplasmic. A helical membrane pass occupies residues 169-189 (TFFAIGMGALITLLCLIKLLP). Residues 190 to 208 (KLPSEHSGSLKSLPLLFRR) are Cytoplasmic-facing. Residues 209–229 (PALMSLYVLTVVVVTAHYTAY) traverse the membrane as a helical segment. The Periplasmic portion of the chain corresponds to 230-245 (SYIEPFVQNVAGLSAN). Residues 246-266 (FATVLLLILGGAGIIGSLVFG) form a helical membrane-spanning segment. Topologically, residues 267-274 (KLGNRHAS) are cytoplasmic. A helical membrane pass occupies residues 275–295 (SLVSIAIALLVVCLLLLLPAA). Topologically, residues 296–300 (ESEAH) are periplasmic. Residues 301 to 321 (LAILSIFWGIAIMVIGLGMQV) form a helical membrane-spanning segment. The Cytoplasmic segment spans residues 322 to 332 (KVLALAPDATD). The chain crosses the membrane as a helical span at residues 333 to 353 (VAMALFSGIFNIGIGAGALVG). Topologically, residues 354–363 (NQVSLHWSMS) are periplasmic. Residues 364–384 (AIGYIGAIPACAALVWAVLIF) form a helical membrane-spanning segment. The Cytoplasmic segment spans residues 385–396 (RKWPVTLEEQPH).

The protein belongs to the major facilitator superfamily. SotB (TC 2.A.1.2) family.

It localises to the cell inner membrane. Functionally, involved in the efflux of sugars. The physiological role may be the reduction of the intracellular concentration of toxic sugars or sugar metabolites. The chain is Probable sugar efflux transporter from Salmonella typhimurium (strain LT2 / SGSC1412 / ATCC 700720).